Reading from the N-terminus, the 645-residue chain is 1,4-alpha-glucan branching enzyme GlgB (645 aa).

D309 functions as the Nucleophile in the catalytic mechanism. The active-site Proton donor is the E352. The tract at residues V619 to R645 is disordered. Positions R636–R645 are enriched in polar residues.

This sequence belongs to the glycosyl hydrolase 13 family. GlgB subfamily. As to quaternary structure, monomer.

It catalyses the reaction Transfers a segment of a (1-&gt;4)-alpha-D-glucan chain to a primary hydroxy group in a similar glucan chain.. It functions in the pathway glycan biosynthesis; glycogen biosynthesis. Functionally, catalyzes the formation of the alpha-1,6-glucosidic linkages in glycogen by scission of a 1,4-alpha-linked oligosaccharide from growing alpha-1,4-glucan chains and the subsequent attachment of the oligosaccharide to the alpha-1,6 position. This Bacillus cereus (strain B4264) protein is 1,4-alpha-glucan branching enzyme GlgB.